The sequence spans 104 residues: Co-chaperonin GroES 2 (104 aa).

It belongs to the GroES chaperonin family. Heptamer of 7 subunits arranged in a ring. Interacts with the chaperonin GroEL.

It localises to the cytoplasm. Functionally, together with the chaperonin GroEL, plays an essential role in assisting protein folding. The GroEL-GroES system forms a nano-cage that allows encapsulation of the non-native substrate proteins and provides a physical environment optimized to promote and accelerate protein folding. GroES binds to the apical surface of the GroEL ring, thereby capping the opening of the GroEL channel. In Rhodopseudomonas palustris (strain ATCC BAA-98 / CGA009), this protein is Co-chaperonin GroES 2.